A 457-amino-acid polypeptide reads, in one-letter code: Bifunctional protein GlmU (457 aa).

A pyrophosphorylase region spans residues 1 to 229 (MSNSAKSVVI…HSEMEGVNNR (229 aa)). UDP-N-acetyl-alpha-D-glucosamine contacts are provided by residues 11-14 (LAAG), Lys-25, Gln-76, 81-82 (GT), 103-105 (YGD), Gly-140, Glu-154, Asn-169, and Asn-227. Asp-105 is a binding site for Mg(2+). Residue Asn-227 coordinates Mg(2+). The segment at 230-250 (LQLAALERIYQTEQAERLLLE) is linker. The N-acetyltransferase stretch occupies residues 251 to 457 (GVMLLDPARF…GWKRPVKKKQ (207 aa)). UDP-N-acetyl-alpha-D-glucosamine is bound by residues Arg-333 and Lys-351. His-363 functions as the Proton acceptor in the catalytic mechanism. Residues Tyr-366 and Asn-377 each contribute to the UDP-N-acetyl-alpha-D-glucosamine site. Acetyl-CoA-binding positions include Ala-380, 386 to 387 (NY), Ser-405, Ala-423, and Arg-440.

It in the N-terminal section; belongs to the N-acetylglucosamine-1-phosphate uridyltransferase family. This sequence in the C-terminal section; belongs to the transferase hexapeptide repeat family. Homotrimer. Mg(2+) is required as a cofactor.

It is found in the cytoplasm. It catalyses the reaction alpha-D-glucosamine 1-phosphate + acetyl-CoA = N-acetyl-alpha-D-glucosamine 1-phosphate + CoA + H(+). The enzyme catalyses N-acetyl-alpha-D-glucosamine 1-phosphate + UTP + H(+) = UDP-N-acetyl-alpha-D-glucosamine + diphosphate. The protein operates within nucleotide-sugar biosynthesis; UDP-N-acetyl-alpha-D-glucosamine biosynthesis; N-acetyl-alpha-D-glucosamine 1-phosphate from alpha-D-glucosamine 6-phosphate (route II): step 2/2. It participates in nucleotide-sugar biosynthesis; UDP-N-acetyl-alpha-D-glucosamine biosynthesis; UDP-N-acetyl-alpha-D-glucosamine from N-acetyl-alpha-D-glucosamine 1-phosphate: step 1/1. Its pathway is bacterial outer membrane biogenesis; LPS lipid A biosynthesis. Its function is as follows. Catalyzes the last two sequential reactions in the de novo biosynthetic pathway for UDP-N-acetylglucosamine (UDP-GlcNAc). The C-terminal domain catalyzes the transfer of acetyl group from acetyl coenzyme A to glucosamine-1-phosphate (GlcN-1-P) to produce N-acetylglucosamine-1-phosphate (GlcNAc-1-P), which is converted into UDP-GlcNAc by the transfer of uridine 5-monophosphate (from uridine 5-triphosphate), a reaction catalyzed by the N-terminal domain. This Proteus mirabilis (strain HI4320) protein is Bifunctional protein GlmU.